The sequence spans 174 residues: Cathepsin B-like cysteine proteinase 3 (174 aa).

Disulfide bonds link cysteine 22–cysteine 55 and cysteine 30–cysteine 42. Residues histidine 122 and asparagine 142 contribute to the active site.

This sequence belongs to the peptidase C1 family.

Its function is as follows. Expression of the protease correlates with blood-feeding and suggests a role for the protease in blood digestion. This chain is Cathepsin B-like cysteine proteinase 3 (CP-3), found in Ostertagia ostertagi (Brown stomach worm).